The chain runs to 256 residues: Imidazole glycerol phosphate synthase subunit HisF (256 aa).

Catalysis depends on residues Asp11 and Asp130.

The protein belongs to the HisA/HisF family. In terms of assembly, heterodimer of HisH and HisF.

The protein resides in the cytoplasm. It catalyses the reaction 5-[(5-phospho-1-deoxy-D-ribulos-1-ylimino)methylamino]-1-(5-phospho-beta-D-ribosyl)imidazole-4-carboxamide + L-glutamine = D-erythro-1-(imidazol-4-yl)glycerol 3-phosphate + 5-amino-1-(5-phospho-beta-D-ribosyl)imidazole-4-carboxamide + L-glutamate + H(+). Its pathway is amino-acid biosynthesis; L-histidine biosynthesis; L-histidine from 5-phospho-alpha-D-ribose 1-diphosphate: step 5/9. IGPS catalyzes the conversion of PRFAR and glutamine to IGP, AICAR and glutamate. The HisF subunit catalyzes the cyclization activity that produces IGP and AICAR from PRFAR using the ammonia provided by the HisH subunit. The protein is Imidazole glycerol phosphate synthase subunit HisF of Prochlorococcus marinus (strain MIT 9301).